The sequence spans 264 residues: 3-methyl-2-oxobutanoate hydroxymethyltransferase (264 aa).

Mg(2+)-binding residues include Asp45 and Asp84. Residues 45 to 46, Asp84, and Lys112 each bind 3-methyl-2-oxobutanoate; that span reads DS. A Mg(2+)-binding site is contributed by Glu114. Glu181 serves as the catalytic Proton acceptor.

Belongs to the PanB family. In terms of assembly, homodecamer; pentamer of dimers. Requires Mg(2+) as cofactor.

It is found in the cytoplasm. It catalyses the reaction 3-methyl-2-oxobutanoate + (6R)-5,10-methylene-5,6,7,8-tetrahydrofolate + H2O = 2-dehydropantoate + (6S)-5,6,7,8-tetrahydrofolate. It participates in cofactor biosynthesis; (R)-pantothenate biosynthesis; (R)-pantoate from 3-methyl-2-oxobutanoate: step 1/2. Its function is as follows. Catalyzes the reversible reaction in which hydroxymethyl group from 5,10-methylenetetrahydrofolate is transferred onto alpha-ketoisovalerate to form ketopantoate. The protein is 3-methyl-2-oxobutanoate hydroxymethyltransferase of Escherichia fergusonii (strain ATCC 35469 / DSM 13698 / CCUG 18766 / IAM 14443 / JCM 21226 / LMG 7866 / NBRC 102419 / NCTC 12128 / CDC 0568-73).